Reading from the N-terminus, the 628-residue chain is Otolith matrix protein OMM-64 (628 aa).

The N-terminal stretch at 1–20 is a signal peptide; it reads MLSRLLIVPLIFALAGLAIS. Positions 43-628 are disordered; it reads KGDKDGGGLT…AAATALAAQS (586 aa). Positions 78 to 93 are enriched in low complexity; it reads DSSPDTTDTPDASSSD. A compositionally biased stretch (polar residues) spans 182-214; the sequence is TESPGSDSAESPGSDSAESPGSDSTESPGSDST. Composition is skewed to basic and acidic residues over residues 246-266, 276-285, and 311-343; these read ETDKDDDKSDDKSDADAATDK, ELDGKAHAED, and RPEKDVKNDSDDSKDTTEDDKPDKDDKKNRDSA. An N-linked (GlcNAc...) asparagine glycan is attached at Asn-318. 5 stretches are compositionally biased toward acidic residues: residues 449–462, 477–489, 514–536, 544–556, and 565–578; these read DSQEDSVDESEAEP, EPQEDDSEEDTDD, DKEDMDKDDMDKDDMDKDDMDKD, DSVDDQSESDAEP, and DEIDGEETMTPDSE. Positions 613 to 628 are enriched in low complexity; the sequence is ASQAADAAATALAAQS.

As to expression, specifically expressed in otolith matrix-producing cells.

The protein resides in the secreted. It localises to the extracellular space. Its subcellular location is the extracellular matrix. In terms of biological role, calcium-binding component of otoliths, a calcium carbonate structure of the inner ear involved in hearing and balance sensing. Binds calcium. The chain is Otolith matrix protein OMM-64 from Oncorhynchus mykiss (Rainbow trout).